The following is a 294-amino-acid chain: 4-hydroxy-tetrahydrodipicolinate synthase (294 aa).

Thr-45 lines the pyruvate pocket. Tyr-133 (proton donor/acceptor) is an active-site residue. Lys-161 acts as the Schiff-base intermediate with substrate in catalysis. Pyruvate is bound at residue Ile-203.

The protein belongs to the DapA family. Homotetramer; dimer of dimers.

It is found in the cytoplasm. It catalyses the reaction L-aspartate 4-semialdehyde + pyruvate = (2S,4S)-4-hydroxy-2,3,4,5-tetrahydrodipicolinate + H2O + H(+). The protein operates within amino-acid biosynthesis; L-lysine biosynthesis via DAP pathway; (S)-tetrahydrodipicolinate from L-aspartate: step 3/4. In terms of biological role, catalyzes the condensation of (S)-aspartate-beta-semialdehyde [(S)-ASA] and pyruvate to 4-hydroxy-tetrahydrodipicolinate (HTPA). This is 4-hydroxy-tetrahydrodipicolinate synthase from Thioalkalivibrio sulfidiphilus (strain HL-EbGR7).